The following is a 688-amino-acid chain: PHD finger protein 21A (688 aa).

Lysine 65 participates in a covalent cross-link: Glycyl lysine isopeptide (Lys-Gly) (interchain with G-Cter in SUMO2). Disordered stretches follow at residues 78–127 and 327–373; these read SQSE…LTAS and PQTV…ENPQ. Residues 85-127 show a composition bias toward low complexity; it reads QTAQQQPLQPLQQQQPQQPQQQQQQQQQHAQQSAAAPPSLTAS. Over residues 336 to 354 the composition is skewed to basic and acidic residues; sequence SLEKQTVKSHPEAEEKQAE. The a.T hook DNA-binding region spans 434-446; sequence TRKRGRPPKYNAV. The tract at residues 449 to 471 is disordered; that stretch reads FGALTPTSPPSSHPDSPENEKTE. Threonine 453 bears the Phosphothreonine mark. The residue at position 456 (serine 456) is a Phosphoserine. A PHD-type zinc finger spans residues 497-544; sequence EDFCSVCRKSGQLLMCDTCSRVYHLDCLEPPLKTIPKGMWICPRCQDQ. Positions 571 to 609 form a coiled coil; that stretch reads KEEEKQKLLKWSSDLKQEREQLEQKVKELSSSISKCMEM. The interval 650–688 is disordered; sequence GALSNGPDCTPPANAASTPAPSPSSQSCTANCNQGEETK. Residues 660–679 show a composition bias toward low complexity; the sequence is PPANAASTPAPSPSSQSCTA.

As to quaternary structure, component of a BHC histone deacetylase complex that contains HDAC1, HDAC2, HMG20B/BRAF35, KDM1A, RCOR1/CoREST and PHF21A/BHC80. The BHC complex may also contain ZMYM2, ZNF217, ZMYM3, GSE1 and GTF2I. In the complex, it interacts directly with HDAC1, HDAC2, HMG20B/BRAF35, KDM1A and RCOR1/CoREST. Expressed in the brain and testis. Weakly or not expressed in other tissues tested. Localized throughout the central nervous system (CNS) in brain, including the cerebellum, hippocampus, and cortex. Notably present in neuronal cells of granular cell layer and dentate gyrus in cerebellum and hippocampus, respectively. In the seminiferous tubules, the signals it is present strongly in spermatocytes, and weakly in spermatogonia and round spermatids. In some cases, it is also observed solely in spermatocytes (at protein level).

The protein localises to the nucleus. In terms of biological role, component of the BHC complex, a corepressor complex that represses transcription of neuron-specific genes in non-neuronal cells. The BHC complex is recruited at RE1/NRSE sites by REST and acts by deacetylating and demethylating specific sites on histones, thereby acting as a chromatin modifier. In the BHC complex, it may act as a scaffold. Inhibits KDM1A-mediated demethylation of 'Lys-4' of histone H3 in vitro, suggesting a role in demethylation regulation. The sequence is that of PHD finger protein 21A from Mus musculus (Mouse).